The sequence spans 1382 residues: Hepatocyte growth factor receptor (1382 aa).

An N-terminal signal peptide occupies residues 1–24 (MKASAVLAPGILALLFTLVQGNDG). Residues 25–933 (ECQEALAKSE…VIVQPDQNFT (909 aa)) lie on the Extracellular side of the membrane. Residues 27 to 516 (QEALAKSEMN…TGKKITKIPL (490 aa)) form the Sema domain. Asn-45, Asn-100, and Asn-106 each carry an N-linked (GlcNAc...) asparagine glycan. 4 disulfide bridges follow: Cys-95–Cys-101, Cys-98–Cys-160, Cys-133–Cys-141, and Cys-173–Cys-176. N-linked (GlcNAc...) asparagine glycosylation is found at Asn-203 and Asn-359. 2 disulfide bridges follow: Cys-299/Cys-364 and Cys-386/Cys-398. N-linked (GlcNAc...) asparagine glycosylation is found at Asn-400 and Asn-406. Intrachain disulfides connect Cys-521/Cys-539, Cys-527/Cys-562, Cys-530/Cys-546, and Cys-542/Cys-552. 3 IPT/TIG domains span residues 564–656 (PAIH…FSYV), 658–740 (PVIT…FSYR), and 743–837 (PIVH…LIYV). Thr-583 carries an O-linked (Man) threonine glycan. Residues Asn-608 and Asn-636 are each glycosylated (N-linked (GlcNAc...) asparagine). O-linked (Man) threonine glycans are attached at residues Thr-677 and Thr-762. N-linked (GlcNAc...) asparagine glycosylation is found at Asn-786, Asn-880, and Asn-931. A helical membrane pass occupies residues 934–956 (GLIVGVVSISIILLLLLGLFLWM). Topologically, residues 957-1382 (KKRKQIKDLG…QDNVNGEVDT (426 aa)) are cytoplasmic. A Phosphoserine modification is found at Ser-967. At Thr-978 the chain carries Phosphothreonine. Phosphoserine occurs at positions 991, 998, and 1001. Residue Tyr-1004 is modified to Phosphotyrosine. Residues 1079-1346 (VHFNEVIGRG…RISAIFSTFI (268 aa)) enclose the Protein kinase domain. Residues 1085-1093 (IGRGHFGCV) and Lys-1111 contribute to the ATP site. Asp-1205 acts as the Proton acceptor in catalysis. Positions 1213–1382 (LDEKFTVKVA…QDNVNGEVDT (170 aa)) are interaction with RANBP9. Tyr-1231 carries the phosphotyrosine modification. A phosphotyrosine; by autocatalysis mark is found at Tyr-1235 and Tyr-1236. A Phosphothreonine modification is found at Thr-1290. Positions 1321–1360 (WHPKAEMRPSFSELVSRISAIFSTFIGEHYVHVNATYVNV) are interaction with MUC20. Residues Tyr-1350 and Tyr-1357 each carry the phosphotyrosine; by autocatalysis modification. The residue at position 1366 (Tyr-1366) is a Phosphotyrosine.

The protein belongs to the protein kinase superfamily. Tyr protein kinase family. Heterodimer made of an alpha chain (50 kDa) and a beta chain (145 kDa) which are disulfide linked. Binds PLXNB1. Interacts when phosphorylated with downstream effectors including STAT3, PIK3R1, SRC, PCLG1, GRB2 and GAB1. Interacts with SPSB1, SPSB2 and SPSB4. Interacts with INPP5D/SHIP1. When phosphorylated at Tyr-1357, interacts with INPPL1/SHIP2. Interacts with RANBP9 and RANBP10, as well as SPSB1, SPSB2, SPSB3 and SPSB4. SPSB1 binding occurs in the presence and in the absence of HGF, however HGF treatment has a positive effect on this interaction. Interacts with MUC20; prevents interaction with GRB2 and suppresses hepatocyte growth factor-induced cell proliferation. Interacts with GRB10. Interacts with PTPN1 and PTPN2. Interacts with HSP90AA1 and HSP90AB1; the interaction suppresses MET kinase activity. Interacts with tensin TNS3. Interacts (when phosphorylated) with tensin TNS4 (via SH2 domain); the interaction increases MET protein stability by inhibiting MET endocytosis and subsequent lysosomal degradation. Autophosphorylated in response to ligand binding on Tyr-1235 and Tyr-1236 in the kinase domain leading to further phosphorylation of Tyr-1350 and Tyr-1357 in the C-terminal multifunctional docking site. Dephosphorylated by PTPRJ at Tyr-1350 and Tyr-1366. Dephosphorylated by PTPN1 and PTPN2. Post-translationally, ubiquitinated. Ubiquitination by CBL regulates the receptor stability and activity through proteasomal degradation. In terms of processing, O-mannosylation of IPT/TIG domains by TMEM260 is required for protein maturation. O-mannosylated residues are composed of single mannose glycans that are not elongated or modified.

It localises to the membrane. It carries out the reaction L-tyrosyl-[protein] + ATP = O-phospho-L-tyrosyl-[protein] + ADP + H(+). With respect to regulation, in its inactive state, the C-terminal tail interacts with the catalytic domain and inhibits the kinase activity. Upon ligand binding, the C-terminal tail is displaced and becomes phosphorylated, thus increasing the kinase activity. Its function is as follows. Receptor tyrosine kinase that transduces signals from the extracellular matrix into the cytoplasm by binding to hepatocyte growth factor/HGF ligand. Regulates many physiological processes including proliferation, scattering, morphogenesis and survival. Ligand binding at the cell surface induces autophosphorylation of MET on its intracellular domain that provides docking sites for downstream signaling molecules. Following activation by ligand, interacts with the PI3-kinase subunit PIK3R1, PLCG1, SRC, GRB2, STAT3 or the adapter GAB1. Recruitment of these downstream effectors by MET leads to the activation of several signaling cascades including the RAS-ERK, PI3 kinase-AKT, or PLCgamma-PKC. The RAS-ERK activation is associated with the morphogenetic effects while PI3K/AKT coordinates prosurvival effects. During embryonic development, MET signaling plays a role in gastrulation, development and migration of muscles and neuronal precursors, angiogenesis and kidney formation. In adults, participates in wound healing as well as organ regeneration and tissue remodeling. Also promotes differentiation and proliferation of hematopoietic cells. The sequence is that of Hepatocyte growth factor receptor (MET) from Eulemur macaco macaco (Black lemur).